The sequence spans 184 residues: Photosystem I assembly protein Ycf4 (184 aa).

The next 2 membrane-spanning stretches (helical) occupy residues 21–43 (NFCW…ISSY) and 58–80 (LFFP…SSYL).

It belongs to the Ycf4 family.

Its subcellular location is the plastid. It localises to the chloroplast thylakoid membrane. In terms of biological role, seems to be required for the assembly of the photosystem I complex. The protein is Photosystem I assembly protein Ycf4 of Carpobrotus chilensis (Sea fig).